A 508-amino-acid polypeptide reads, in one-letter code: Photosystem II CP47 reaction center protein (508 aa).

6 helical membrane-spanning segments follow: residues 21 to 36 (SVHIMHTALVSGWAGS), 101 to 115 (IVFSGLCFLAAIWHW), 140 to 156 (GIHLFLSGVACFGSGAF), 203 to 218 (IAAGILGILAGLFHLS), 237 to 252 (VLSSSIAAVFFAAFIV), and 457 to 472 (TFALLFFFGHIWHGAR).

It belongs to the PsbB/PsbC family. PsbB subfamily. PSII is composed of 1 copy each of membrane proteins PsbA, PsbB, PsbC, PsbD, PsbE, PsbF, PsbH, PsbI, PsbJ, PsbK, PsbL, PsbM, PsbT, PsbX, PsbY, PsbZ, Psb30/Ycf12, at least 3 peripheral proteins of the oxygen-evolving complex and a large number of cofactors. It forms dimeric complexes. The cofactor is Binds multiple chlorophylls. PSII binds additional chlorophylls, carotenoids and specific lipids..

Its subcellular location is the plastid. It is found in the chloroplast thylakoid membrane. Its function is as follows. One of the components of the core complex of photosystem II (PSII). It binds chlorophyll and helps catalyze the primary light-induced photochemical processes of PSII. PSII is a light-driven water:plastoquinone oxidoreductase, using light energy to abstract electrons from H(2)O, generating O(2) and a proton gradient subsequently used for ATP formation. The polypeptide is Photosystem II CP47 reaction center protein (Cycas taitungensis (Prince sago)).